The primary structure comprises 264 residues: S-adenosylmethionine decarboxylase proenzyme (264 aa).

S112 acts as the Schiff-base intermediate with substrate; via pyruvic acid in catalysis. At S112 the chain carries Pyruvic acid (Ser); by autocatalysis. The active-site Proton acceptor; for processing activity is the H117. C140 functions as the Proton donor; for catalytic activity in the catalytic mechanism.

This sequence belongs to the prokaryotic AdoMetDC family. Type 2 subfamily. In terms of assembly, heterooctamer of four alpha and four beta chains arranged as a tetramer of alpha/beta heterodimers. Pyruvate is required as a cofactor. Is synthesized initially as an inactive proenzyme. Formation of the active enzyme involves a self-maturation process in which the active site pyruvoyl group is generated from an internal serine residue via an autocatalytic post-translational modification. Two non-identical subunits are generated from the proenzyme in this reaction, and the pyruvate is formed at the N-terminus of the alpha chain, which is derived from the carboxyl end of the proenzyme. The post-translation cleavage follows an unusual pathway, termed non-hydrolytic serinolysis, in which the side chain hydroxyl group of the serine supplies its oxygen atom to form the C-terminus of the beta chain, while the remainder of the serine residue undergoes an oxidative deamination to produce ammonia and the pyruvoyl group blocking the N-terminus of the alpha chain.

The enzyme catalyses S-adenosyl-L-methionine + H(+) = S-adenosyl 3-(methylsulfanyl)propylamine + CO2. It participates in amine and polyamine biosynthesis; S-adenosylmethioninamine biosynthesis; S-adenosylmethioninamine from S-adenosyl-L-methionine: step 1/1. In terms of biological role, catalyzes the decarboxylation of S-adenosylmethionine to S-adenosylmethioninamine (dcAdoMet), the propylamine donor required for the synthesis of the polyamines spermine and spermidine from the diamine putrescine. The sequence is that of S-adenosylmethionine decarboxylase proenzyme from Pectobacterium atrosepticum (strain SCRI 1043 / ATCC BAA-672) (Erwinia carotovora subsp. atroseptica).